A 381-amino-acid polypeptide reads, in one-letter code: Acetyl-CoA:oxalate CoA-transferase (381 aa).

H233 is a catalytic residue.

It belongs to the CoA-transferase III family. Homodimer.

It carries out the reaction oxalate + acetyl-CoA = oxalyl-CoA + acetate. In terms of biological role, involved in the catabolism of oxalate and in the adapatation to low pH. ACOCT serves to prime the oxalate-induced acid tolerance response (ATR) cycle by producing substrate for oxalyl-CoA decarboxylase (OXC) and formyl-coenzyme A transferase (FCOCT). Catalyzes the reversible conversion of acetyl-CoA and oxalate to oxalyl-CoA and acetate. It can also use formyl-CoA and oxalate to produce oxalyl-CoA and formate with significantly reduced specific activity. This Escherichia coli (strain K12) protein is Acetyl-CoA:oxalate CoA-transferase (yfdE).